We begin with the raw amino-acid sequence, 316 residues long: Adenine deaminase (316 aa).

The Zn(2+) site is built by histidine 14, histidine 16, and histidine 194. Glutamate 197 acts as the Proton donor in catalysis. Aspartate 275 lines the Zn(2+) pocket. Aspartate 276 is a binding site for substrate.

This sequence belongs to the metallo-dependent hydrolases superfamily. Adenosine and AMP deaminases family. Adenine deaminase type 2 subfamily. Requires Zn(2+) as cofactor.

The catalysed reaction is adenine + H2O + H(+) = hypoxanthine + NH4(+). Catalyzes the hydrolytic deamination of adenine to hypoxanthine. Plays an important role in the purine salvage pathway and in nitrogen catabolism. The sequence is that of Adenine deaminase from Pseudomonas aeruginosa (strain LESB58).